The sequence spans 448 residues: tRNA-2-methylthio-N(6)-dimethylallyladenosine synthase (448 aa).

Positions 3–120 (KKLFIKTHGC…LPTMLDSRQG (118 aa)) constitute an MTTase N-terminal domain. Cysteine 12, cysteine 49, cysteine 83, cysteine 158, cysteine 162, and cysteine 165 together coordinate [4Fe-4S] cluster. A Radical SAM core domain is found at 144–376 (TSDGATAFVS…QERLNQQTMQ (233 aa)). The TRAM domain occupies 379-444 (RRMVGNTERI…PNSLRGDLAS (66 aa)).

It belongs to the methylthiotransferase family. MiaB subfamily. Monomer. Requires [4Fe-4S] cluster as cofactor.

The protein localises to the cytoplasm. It catalyses the reaction N(6)-dimethylallyladenosine(37) in tRNA + (sulfur carrier)-SH + AH2 + 2 S-adenosyl-L-methionine = 2-methylsulfanyl-N(6)-dimethylallyladenosine(37) in tRNA + (sulfur carrier)-H + 5'-deoxyadenosine + L-methionine + A + S-adenosyl-L-homocysteine + 2 H(+). In terms of biological role, catalyzes the methylthiolation of N6-(dimethylallyl)adenosine (i(6)A), leading to the formation of 2-methylthio-N6-(dimethylallyl)adenosine (ms(2)i(6)A) at position 37 in tRNAs that read codons beginning with uridine. This Chromohalobacter salexigens (strain ATCC BAA-138 / DSM 3043 / CIP 106854 / NCIMB 13768 / 1H11) protein is tRNA-2-methylthio-N(6)-dimethylallyladenosine synthase.